A 307-amino-acid chain; its full sequence is Coproporphyrin III ferrochelatase (307 aa).

Residues Tyr12, Arg29, 45–46 (RY), Ser53, and Tyr124 each bind Fe-coproporphyrin III. Positions 181 and 263 each coordinate Fe(2+).

Belongs to the ferrochelatase family.

Its subcellular location is the cytoplasm. The enzyme catalyses Fe-coproporphyrin III + 2 H(+) = coproporphyrin III + Fe(2+). Its pathway is porphyrin-containing compound metabolism; protoheme biosynthesis. Functionally, involved in coproporphyrin-dependent heme b biosynthesis. Catalyzes the insertion of ferrous iron into coproporphyrin III to form Fe-coproporphyrin III. It can also insert iron into protoporphyrin IX, but it has a much stronger preference for coproprophyrin III as the substrate. The chain is Coproporphyrin III ferrochelatase from Staphylococcus aureus (strain NCTC 8325 / PS 47).